Here is a 285-residue protein sequence, read N- to C-terminus: Probable endonuclease 4 (285 aa).

Zn(2+)-binding residues include H69, H109, E145, D179, H182, H216, D229, H231, and E261.

Belongs to the AP endonuclease 2 family. Requires Zn(2+) as cofactor.

The catalysed reaction is Endonucleolytic cleavage to 5'-phosphooligonucleotide end-products.. Endonuclease IV plays a role in DNA repair. It cleaves phosphodiester bonds at apurinic or apyrimidinic (AP) sites, generating a 3'-hydroxyl group and a 5'-terminal sugar phosphate. The sequence is that of Probable endonuclease 4 from Yersinia pseudotuberculosis serotype O:1b (strain IP 31758).